Here is a 273-residue protein sequence, read N- to C-terminus: Lactose transport system permease protein LacG (273 aa).

6 consecutive transmembrane segments (helical) span residues 15 to 35, 77 to 97, 110 to 130, 134 to 154, 182 to 204, and 240 to 260; these read YSVLSLAAFLSIFPFIWMVIG, IALVGTALTLLVSSLAGYGFE, VILLTLMVPFAALMIPLFMLM, GLLNTHIAIMLPMIASAFIIF, FFYIYVPVMRSTYAAAFVIVFML, and GTVMIGTILATLPTLLVFFAM. One can recognise an ABC transmembrane type-1 domain in the interval 71–260; it reads FWNSVKIALV…LPTLLVFFAM (190 aa).

Belongs to the binding-protein-dependent transport system permease family. MalFG subfamily.

Its subcellular location is the cell inner membrane. Part of the binding-protein-dependent transport system for lactose. Probably responsible for the translocation of the substrate across the membrane. The polypeptide is Lactose transport system permease protein LacG (lacG) (Rhizobium radiobacter (Agrobacterium tumefaciens)).